The following is a 471-amino-acid chain: Nitrosourea synthase (471 aa).

The segment at 177–328 is HO-like; sequence MWLVQFAPDF…GRMAREKIIK (152 aa). Fe(2+) contacts are provided by Glu-189, Glu-215, His-225, Glu-281, His-311, Asp-315, His-318, His-407, His-409, and His-448. The cupin stretch occupies residues 397–459; that stretch reads VEPRGELSNT…ANIESDECVY (63 aa).

In terms of assembly, homodimer. The cofactor is Fe(2+).

The catalysed reaction is N(omega)-methyl-L-arginine + 2 NADH + 3 O2 + H(+) = N(delta)-hydroxy-N(omega)-methyl-N(omega)-nitroso-L-citrulline + 2 NAD(+) + 3 H2O. It catalyses the reaction N(omega)-methyl-L-arginine + NADH + O2 + H(+) = N(delta)-hydroxy-N(omega)-methyl-L-arginine + NAD(+) + H2O. It carries out the reaction N(delta)-hydroxy-N(omega)-methyl-L-arginine + NADH + O2 = N(delta),N(omega')-dihydroxy-N(omega)-methyl-L-arginine + NAD(+) + H2O. The enzyme catalyses N(delta),N(omega')-dihydroxy-N(omega)-methyl-L-arginine + O2 = N(delta)-hydroxy-N(omega)-methyl-N(omega)-nitroso-L-citrulline + H2O. The catalysed reaction is 2 N(delta)-hydroxy-N(omega)-methyl-N(omega)-nitroso-L-citrulline + AH2 = 2 N(delta)-hydroxy-N(omega)-methyl-L-citrulline + 2 nitric oxide + A. It participates in antibiotic biosynthesis. Functionally, involved in the biosynthesis of the glucosamine-nitrosourea antibiotic streptozotocin (SZN). Catalyzes a complex multi-step reaction: the overall reaction is an oxidative rearrangement of the guanidine group of N(omega)-methyl-L-arginine (L-NMA), generating an N-nitrosourea product. SznF first hydroxylates L-NMA to form N(delta)-hydroxy-N(omega)-methyl-L-arginine (L-HMA), which is further hydroxylated to give N(delta)-hydroxy-N(omega)-hydroxy-N(omega)-methyl-L-arginine (L-DHMA). Subsequently, an oxidative rearrangement converts this intermediate to N(delta)-hydroxy-N(omega)-methyl-N(omega)-nitroso-L-citrulline. This product is unstable, and degrades non-enzymically into nitric oxide and the denitrosated product N(delta)-hydroxy-N(omega)-methyl-L-citrulline. This chain is Nitrosourea synthase, found in Streptomyces achromogenes subsp. streptozoticus.